We begin with the raw amino-acid sequence, 179 residues long: MNQLDLIKSSIKSIPDYPKAGIIFRDITSLLEVPEAFKATVDAIVAEFKDKGITKVVGTESRGFIFGAPVALALGVPFVLVRKPKKLPRAVISQSYALEYGEDTLEIHLDSVKENDNVLMVDDLLATGGTIDATAKLIRRLGGKVEHAAFVIWLPDLGGKERLEKEGINSFTLVEFAGH.

It belongs to the purine/pyrimidine phosphoribosyltransferase family. In terms of assembly, homodimer.

It localises to the cytoplasm. The enzyme catalyses AMP + diphosphate = 5-phospho-alpha-D-ribose 1-diphosphate + adenine. It functions in the pathway purine metabolism; AMP biosynthesis via salvage pathway; AMP from adenine: step 1/1. Functionally, catalyzes a salvage reaction resulting in the formation of AMP, that is energically less costly than de novo synthesis. This chain is Adenine phosphoribosyltransferase, found in Actinobacillus pleuropneumoniae serotype 5b (strain L20).